The primary structure comprises 404 residues: Retrotransposable element SLACS 45 kDa protein (404 aa).

Polar residues-rich tracts occupy residues 1 to 11 (MVRNLRSSEPQ) and 29 to 41 (PALN…QKQV). 5 disordered regions span residues 1–62 (MVRN…NTSI), 86–111 (KKAA…GRPP), 134–251 (LGKG…KKGA), 317–341 (CRQQ…GAVS), and 369–404 (PKLP…AGPP). The span at 98–111 (VNKEGNRKKYGRPP) shows a compositional bias: basic and acidic residues. Polar residues predominate over residues 141–151 (TAHTKSNQSRV). A C2H2-type zinc finger spans residues 300–321 (CPVCGFAHPEETITVTHCRQQH). Positions 395–404 (HHCDRSAGPP) are enriched in basic and acidic residues.

This Trypanosoma brucei gambiense protein is Retrotransposable element SLACS 45 kDa protein.